Reading from the N-terminus, the 427-residue chain is MESLTLQPIARVDGAINLPGSKSVSNRALLLAALACGKTVLTNLLDSDDVRHMLNALSALGINYTLSADRTRCDITGNGGPLRASGALELFLGNAGTAMRPLAAALCLGQNEIVLTGEPRMKERPIGHLVDSLRQGGANIDYLEQENYPPLRLRGGFIGGDIEVDGSVSSQFLTALLMTAPLAPEDTIIRVKGELVSKPYIDITLNLMKTFGVEIANHHYQQFVVKGGQQYHSPGRYLVEGDASSASYFLAAGAIKGGTVKVTGIGRKSMQGDIRFADVLEKMGATITWGDDFIACTRGELHAIDMDMNHIPDAAMTIATTALFAKGTTTLRNIYNWRVKETDRLFAMATELRKVGAEVEEGHDYIRITPPAKLHHADIGTYNDHRMAMCFSLVALSDTPVTILDPKCTAKTFPDYFEQLARMSTPA.

Positions 22, 23, and 27 each coordinate 3-phosphoshikimate. Lys-22 lines the phosphoenolpyruvate pocket. Residues Gly-96 and Arg-124 each contribute to the phosphoenolpyruvate site. Positions 169, 170, 171, 197, 313, 336, and 340 each coordinate 3-phosphoshikimate. Gln-171 contributes to the phosphoenolpyruvate binding site. Asp-313 acts as the Proton acceptor in catalysis. Residues Arg-344, Arg-386, and Lys-411 each coordinate phosphoenolpyruvate.

Belongs to the EPSP synthase family. As to quaternary structure, monomer.

It localises to the cytoplasm. The catalysed reaction is 3-phosphoshikimate + phosphoenolpyruvate = 5-O-(1-carboxyvinyl)-3-phosphoshikimate + phosphate. It participates in metabolic intermediate biosynthesis; chorismate biosynthesis; chorismate from D-erythrose 4-phosphate and phosphoenolpyruvate: step 6/7. Catalyzes the transfer of the enolpyruvyl moiety of phosphoenolpyruvate (PEP) to the 5-hydroxyl of shikimate-3-phosphate (S3P) to produce enolpyruvyl shikimate-3-phosphate and inorganic phosphate. This chain is 3-phosphoshikimate 1-carboxyvinyltransferase, found in Salmonella paratyphi A (strain ATCC 9150 / SARB42).